A 208-amino-acid chain; its full sequence is Predicted GPI-anchored protein 37 (208 aa).

Positions 1–18 are cleaved as a signal peptide; sequence MLFTQLIILLTVTSQALS. Residues 33 to 93 form a disordered region; the sequence is TKRLGGGSRG…SSSSSGSRNW (61 aa). Over residues 36-53 the composition is skewed to gly residues; it reads LGGGSRGGSSSGSRGGSS. Positions 54 to 63 are enriched in low complexity; that stretch reads SGSSSGSSSG. Asn173 carries N-linked (GlcNAc...) asparagine glycosylation. Ser185 is lipidated: GPI-anchor amidated serine. Residues 186-208 constitute a propeptide, removed in mature form; the sequence is SSLNIPSTHFYLIGFAAAYSIVL.

The protein belongs to the PGA37 family.

Its subcellular location is the cell membrane. In terms of biological role, predicted GPI-anchored protein which may have a role during host infection. This chain is Predicted GPI-anchored protein 37 (PGA37), found in Candida albicans (strain SC5314 / ATCC MYA-2876) (Yeast).